The chain runs to 1340 residues: TSET complex member tstE (1340 aa).

Positions 56-67 (NQSQTSPNSNDG) are enriched in low complexity. Disordered regions lie at residues 56 to 75 (NQSQTSPNSNDGNIGGGSGG) and 110 to 131 (SGSGGGGSGSNSNIGGGGGGGQ). WD repeat units lie at residues 208–246 (VNQILFNCLCFHPKSPILYAAIRNEVHFYDIITKSVIGK), 250–294 (DPTE…LQTI), 345–384 (GHKKPISAIAHHPAKTILASCSTDGQLKIWDTRNNMSFLN), and 397–436 (IEHSNHYFLVFEPTGKYLVMTGSSGLTLVYGDLTSQNPQE). A compositionally biased stretch (polar residues) spans 1216–1251 (KSHMSSTTTLRRSPSIENIRTTSTTFDSSKFNTDNQ). The disordered stretch occupies residues 1216–1340 (KSHMSSTTTL…TPTPTTTLSS (125 aa)). The segment covering 1252-1275 (ELFDDDSDDDSDSGADADVDSENE) has biased composition (acidic residues). Residues 1286-1318 (ASLQHNDNSSLTNITVTDNDSNLDQDITSNTGS) are compositionally biased toward polar residues. Over residues 1328 to 1340 (LSSTPTPTTTLSS) the composition is skewed to low complexity.

As to quaternary structure, component of the TSET complex, a heterohexamer composed of tstA, tstB, tstC, tstD, tstE and tstF, which may act in plasma membrane turnover. tstA, tstB, tstC and tstD are likely to be the core complex members with tstE and tstF acting as associated scaffold proteins.

The polypeptide is TSET complex member tstE (Dictyostelium discoideum (Social amoeba)).